Here is a 443-residue protein sequence, read N- to C-terminus: Probable D-serine dehydratase (443 aa).

Position 118 is an N6-(pyridoxal phosphate)lysine (lysine 118).

This sequence belongs to the serine/threonine dehydratase family. DsdA subfamily. It depends on pyridoxal 5'-phosphate as a cofactor.

The enzyme catalyses D-serine = pyruvate + NH4(+). The chain is Probable D-serine dehydratase from Aeromonas hydrophila subsp. hydrophila (strain ATCC 7966 / DSM 30187 / BCRC 13018 / CCUG 14551 / JCM 1027 / KCTC 2358 / NCIMB 9240 / NCTC 8049).